The primary structure comprises 37 residues: Neuropeptide Y2-like conopeptide (37 aa).

Tyrosine 37 is subject to Tyrosine amide.

Belongs to the NPY family. As to expression, expressed by the venom duct.

It localises to the secreted. Functionally, causes hyperactivity such as jumping, rapid circling and tail flicking, after intraventicular injection into mouse brain. This is Neuropeptide Y2-like conopeptide from Conus betulinus (Beech cone).